We begin with the raw amino-acid sequence, 198 residues long: uncharacterized protein (198 aa).

The first 28 residues, 1–28, serve as a signal peptide directing secretion; that stretch reads MHPTQRKLMKRIILFLSLLFCIACPAIA.

The protein belongs to the fimbrial protein family.

The protein resides in the fimbrium. Its function is as follows. Part of the yadCKLM-htrE-yadVN fimbrial operon. Could contribute to adhesion to various surfaces in specific environmental niches. This is an uncharacterized protein from Escherichia coli (strain K12).